We begin with the raw amino-acid sequence, 77 residues long: Translational regulator CsrA (77 aa).

The tract at residues 58–77 is disordered; sequence ANRRTAEETLDQASRLLSQK. The span at 68-77 shows a compositional bias: polar residues; sequence DQASRLLSQK.

It belongs to the CsrA/RsmA family. As to quaternary structure, homodimer; the beta-strands of each monomer intercalate to form a hydrophobic core, while the alpha-helices form wings that extend away from the core.

It localises to the cytoplasm. A translational regulator that binds mRNA to regulate translation initiation and/or mRNA stability. Usually binds in the 5'-UTR at or near the Shine-Dalgarno sequence preventing ribosome-binding, thus repressing translation. Its main target seems to be the major flagellin gene, while its function is anatagonized by FliW. The chain is Translational regulator CsrA from Magnetococcus marinus (strain ATCC BAA-1437 / JCM 17883 / MC-1).